The following is a 178-amino-acid chain: ATP synthase subunit delta (178 aa).

It belongs to the ATPase delta chain family. In terms of assembly, F-type ATPases have 2 components, F(1) - the catalytic core - and F(0) - the membrane proton channel. F(1) has five subunits: alpha(3), beta(3), gamma(1), delta(1), epsilon(1). F(0) has three main subunits: a(1), b(2) and c(10-14). The alpha and beta chains form an alternating ring which encloses part of the gamma chain. F(1) is attached to F(0) by a central stalk formed by the gamma and epsilon chains, while a peripheral stalk is formed by the delta and b chains.

The protein localises to the cell membrane. Functionally, f(1)F(0) ATP synthase produces ATP from ADP in the presence of a proton or sodium gradient. F-type ATPases consist of two structural domains, F(1) containing the extramembraneous catalytic core and F(0) containing the membrane proton channel, linked together by a central stalk and a peripheral stalk. During catalysis, ATP synthesis in the catalytic domain of F(1) is coupled via a rotary mechanism of the central stalk subunits to proton translocation. Its function is as follows. This protein is part of the stalk that links CF(0) to CF(1). It either transmits conformational changes from CF(0) to CF(1) or is implicated in proton conduction. The polypeptide is ATP synthase subunit delta (Streptococcus pyogenes serotype M6 (strain ATCC BAA-946 / MGAS10394)).